The sequence spans 325 residues: uncharacterized protein (325 aa).

Polar residues-rich tracts occupy residues 1–21 (MSYQ…SSSA) and 29–57 (EPFS…SSRA). Residues 1–325 (MSYQQRANDS…LKTGHHSERY (325 aa)) are disordered. Basic and acidic residues predominate over residues 86-109 (ESRKKEQSDVRGGDTSYSRRHDDS). Polar residues-rich tracts occupy residues 114 to 167 (NKYS…TTQG) and 174 to 193 (YSQS…TPSD). Composition is skewed to low complexity over residues 200–210 (YDYSSSGSHTH) and 252–278 (ATDT…QRNA). A compositionally biased stretch (basic and acidic residues) spans 282-325 (EDEHVSMGDKMKGNMEKMAGKLTRDPELVQKGEDLKTGHHSERY).

This is an uncharacterized protein from Schizosaccharomyces pombe (strain 972 / ATCC 24843) (Fission yeast).